The following is a 620-amino-acid chain: Hemagglutinin glycoprotein (620 aa).

The Intravirion portion of the chain corresponds to 1–37; the sequence is MSPQRDRTNAFYKDNPHPKGSRIVINREHLMIDRPYV. The segment at 1–154 is stalk; the sequence is MSPQRDRTNA…RIKLDYDQYC (154 aa). A helical; Signal-anchor for type II membrane protein transmembrane segment spans residues 38–58; it reads LLAILFVMFLSLIGLLAIAGI. The Virion surface portion of the chain corresponds to 59–620; sequence RLHQAAIHTA…EDGTNRRQSC (562 aa). Asparagine 168, asparagine 187, asparagine 200, asparagine 215, and asparagine 238 each carry an N-linked (GlcNAc...) asparagine; by host glycan. Disulfide bonds link cysteine 188–cysteine 606, cysteine 287–cysteine 300, cysteine 381–cysteine 494, cysteine 386–cysteine 394, and cysteine 570–cysteine 579. An interaction with host NECTIN4 receptor region spans residues 458–543; that stretch reads PMKNLALGVI…VEHAVVYYVY (86 aa).

The protein belongs to the paramyxoviruses hemagglutinin-neuraminidase family. Non-sialidase subfamily. In terms of assembly, homodimer; disulfide-linked. Further forms homotetramer (dimer of dimers). Interacts (via C-terminus) with human NECTIN4 (via N-terminus); this interaction allows attachment to the respiratory epithelium and viral entry. Interacts (via C-terminus) with human SLAMF1/CD150 (via N-terminus); this interaction allows attachment and viral entry into the CD150-expressing immune cells.

The protein localises to the virion membrane. It localises to the host cell membrane. Functionally, attaches the virus to the human SLAMF1/CD150 receptor for entry into host dendritic cells, macrophages, activated memory T cells and naive or memory B cells, thereby explaining the long immunosuppression that follows infection. In the respiratory airways, binds to the NECTIN4 receptor for entry into the host cell. Binding of H protein to the receptor induces a conformational change that allows the F protein to trigger virion/cell membranes fusion. This is Hemagglutinin glycoprotein (H) from Homo sapiens (Human).